The following is a 97-amino-acid chain: Large ribosomal subunit protein uL23 (97 aa).

The protein belongs to the universal ribosomal protein uL23 family. In terms of assembly, part of the 50S ribosomal subunit. Contacts protein L29, and trigger factor when it is bound to the ribosome.

Functionally, one of the early assembly proteins it binds 23S rRNA. One of the proteins that surrounds the polypeptide exit tunnel on the outside of the ribosome. Forms the main docking site for trigger factor binding to the ribosome. The polypeptide is Large ribosomal subunit protein uL23 (Brucella suis (strain ATCC 23445 / NCTC 10510)).